A 232-amino-acid chain; its full sequence is Histone H1B (232 aa).

Over residues 1–18 the composition is skewed to low complexity; that stretch reads MSDPAVEVTPAVPVASPA. Disordered regions lie at residues 1–44 and 99–232; these read MSDP…PPVS and QTKG…AKKA. The region spanning 39–113 is the H15 domain; the sequence is THPPVSEMVV…GASGSFKLPA (75 aa). Basic residues-rich tracts occupy residues 132–141, 147–173, 181–197, 205–214, and 222–232; these read KPKKAAAKPK, KVKKTIAKKPKAAAATKIKKPVAKTTK, AAKKAAPKPKAAPKPKA, KRAAAPKAKK, and KAAKKPAAKKA.

It belongs to the histone H1/H5 family.

Its subcellular location is the nucleus. It localises to the chromosome. Functionally, histones H1 are necessary for the condensation of nucleosome chains into higher-order structures. This Chironomus tentans (Midge) protein is Histone H1B.